The following is a 431-amino-acid chain: Hemagglutinin-esterase (431 aa).

Positions 1 to 21 are cleaved as a signal peptide; the sequence is MARTDAMAPRTLLLVLSLGYA. The interval 11–131 is esterase domain 1; the sequence is TLLLVLSLGY…DNNRWMGNKA (121 aa). Over 22–399 the chain is Virion surface; it reads FGFNEPLNVV…PVCMYDPLPV (378 aa). S44 (nucleophile) is an active-site residue. C48 and C69 form a disulfide bridge. N-linked (GlcNAc...) asparagine; by host glycans are attached at residues N53, N93, N151, N157, N199, N244, N248, and N309. C117 and C166 are disulfide-bonded. Positions 132–274 are receptor binding; sequence RFYTQLYQKM…GNYISISNEL (143 aa). Disulfide bonds link C205–C284 and C213–C257. The esterase domain 2 stretch occupies residues 275 to 387; that stretch reads LLTVPSKAIC…HCPTAANIVF (113 aa). C315 and C320 form a disulfide bridge. N324 is a glycosylation site (N-linked (GlcNAc...) asparagine; by host). Active-site charge relay system residues include D334 and H337. 2 N-linked (GlcNAc...) asparagine; by host glycosylation sites follow: N352 and N366. An intrachain disulfide couples C355 to C379. Residues 400–420 form a helical membrane-spanning segment; sequence ILLGVLLGIAVLIIVFLMFYF. Residues 421-431 lie on the Intravirion side of the membrane; it reads MTDSGVRLHEA.

Belongs to the influenza type C/coronaviruses hemagglutinin-esterase family. In terms of assembly, homodimer; disulfide-linked. Forms a complex with the M protein in the pre-Golgi. Associates then with S-M complex to form a ternary complex S-M-HE. Post-translationally, N-glycosylated in the host RER.

Its subcellular location is the virion membrane. It localises to the host cell membrane. The catalysed reaction is N-acetyl-9-O-acetylneuraminate + H2O = N-acetylneuraminate + acetate + H(+). The enzyme catalyses N-acetyl-4-O-acetylneuraminate + H2O = N-acetylneuraminate + acetate + H(+). In terms of biological role, structural protein that makes short spikes at the surface of the virus. Contains receptor binding and receptor-destroying activities. Mediates de-O-acetylation of N-acetyl-4-O-acetylneuraminic acid, which is probably the receptor determinant recognized by the virus on the surface of erythrocytes and susceptible cells. This receptor-destroying activity is important for virus release as it probably helps preventing self-aggregation and ensures the efficient spread of the progeny virus from cell to cell. May serve as a secondary viral attachment protein for initiating infection, the spike protein being the major one. May become a target for both the humoral and the cellular branches of the immune system. This chain is Hemagglutinin-esterase, found in Murine coronavirus (strain DVIM) (MHV-DVIM).